The following is a 648-amino-acid chain: Probable LRR receptor-like serine/threonine-protein kinase At4g30520 (648 aa).

Positions 1-30 are cleaved as a signal peptide; sequence MVVVTKKTMKIQIHLLYSFLFLCFSTLTLS. Over 31–238 the chain is Extracellular; the sequence is SEPRNPEVEA…SSSGRRSNRL (208 aa). N-linked (GlcNAc...) asparagine glycans are attached at residues Asn-99 and Asn-112. 4 LRR repeats span residues 100–125, 127–148, 149–172, and 174–199; these read LTNLRQVSLQNNNISGKIPPELGFLP, LQTLDLSNNRFSGDIPVSIDQL, SSLQYLRLNNNSLSGPFPASLSQI, and HLSFLDLSYNNLSGPVPKFPARTFNV. Asn-158 and Asn-184 each carry an N-linked (GlcNAc...) asparagine glycan. A helical membrane pass occupies residues 239-259; that stretch reads AIALSVSLGSVVILVLALGSF. Topologically, residues 260–648 are cytoplasmic; it reads CWYRKKQRRL…SFAMELSGPR (389 aa). Thr-300 is modified (phosphothreonine). Positions 303-582 constitute a Protein kinase domain; sequence FSSKNILGAG…EGDGLAERWA (280 aa). 309-317 lines the ATP pocket; it reads LGAGGFGNV. The residue at position 326 (Thr-326) is a Phosphothreonine. Residue Lys-331 coordinates ATP. 2 positions are modified to phosphoserine: Ser-384 and Ser-387. The active-site Proton acceptor is Asp-426. Phosphothreonine occurs at positions 459, 460, and 465. Tyr-473 bears the Phosphotyrosine mark. Ser-475 carries the post-translational modification Phosphoserine. Position 476 is a phosphothreonine (Thr-476). Residue Ser-480 is modified to Phosphoserine. Phosphothreonine is present on Thr-555.

The protein belongs to the protein kinase superfamily. Ser/Thr protein kinase family.

The protein localises to the cell membrane. The catalysed reaction is L-seryl-[protein] + ATP = O-phospho-L-seryl-[protein] + ADP + H(+). It carries out the reaction L-threonyl-[protein] + ATP = O-phospho-L-threonyl-[protein] + ADP + H(+). The chain is Probable LRR receptor-like serine/threonine-protein kinase At4g30520 from Arabidopsis thaliana (Mouse-ear cress).